The following is a 265-amino-acid chain: Cytochrome c oxidase subunit 3 (265 aa).

7 helical membrane-spanning segments follow: residues 16 to 36, 41 to 61, 84 to 104, 137 to 157, 162 to 182, 200 to 220, and 245 to 265; these read PWPISGSLGALATTVGGVMYM, GGATLLSLGLIFLLYTMFVWW, YGSILFIVSEVMFLFAFFWAS, TPILLSSGAAVTWAHHAILAG, AVYALVATVSLAIVFTGFQGM, FYLATGFHGFHVIIGTLFSII, and WHFVDVVRLFLFVSIYWWGGI.

This sequence belongs to the cytochrome c oxidase subunit 3 family. In terms of assembly, component of the cytochrome c oxidase (complex IV, CIV), a multisubunit enzyme composed of a catalytic core of 3 subunits and several supernumerary subunits. The complex exists as a monomer or a dimer and forms supercomplexes (SCs) in the inner mitochondrial membrane with ubiquinol-cytochrome c oxidoreductase (cytochrome b-c1 complex, complex III, CIII).

The protein resides in the mitochondrion inner membrane. The catalysed reaction is 4 Fe(II)-[cytochrome c] + O2 + 8 H(+)(in) = 4 Fe(III)-[cytochrome c] + 2 H2O + 4 H(+)(out). In terms of biological role, component of the cytochrome c oxidase, the last enzyme in the mitochondrial electron transport chain which drives oxidative phosphorylation. The respiratory chain contains 3 multisubunit complexes succinate dehydrogenase (complex II, CII), ubiquinol-cytochrome c oxidoreductase (cytochrome b-c1 complex, complex III, CIII) and cytochrome c oxidase (complex IV, CIV), that cooperate to transfer electrons derived from NADH and succinate to molecular oxygen, creating an electrochemical gradient over the inner membrane that drives transmembrane transport and the ATP synthase. Cytochrome c oxidase is the component of the respiratory chain that catalyzes the reduction of oxygen to water. Electrons originating from reduced cytochrome c in the intermembrane space (IMS) are transferred via the dinuclear copper A center (CU(A)) of subunit 2 and heme A of subunit 1 to the active site in subunit 1, a binuclear center (BNC) formed by heme A3 and copper B (CU(B)). The BNC reduces molecular oxygen to 2 water molecules using 4 electrons from cytochrome c in the IMS and 4 protons from the mitochondrial matrix. This Oenothera berteroana (Bertero's evening primrose) protein is Cytochrome c oxidase subunit 3 (COX3).